Reading from the N-terminus, the 188-residue chain is Ribosomal RNA small subunit methyltransferase G (188 aa).

S-adenosyl-L-methionine contacts are provided by residues Gly-69, Phe-74, 119–120 (VQ), and Arg-134.

This sequence belongs to the methyltransferase superfamily. RNA methyltransferase RsmG family.

It is found in the cytoplasm. It catalyses the reaction guanosine(527) in 16S rRNA + S-adenosyl-L-methionine = N(7)-methylguanosine(527) in 16S rRNA + S-adenosyl-L-homocysteine. Functionally, specifically methylates the N7 position of guanine in position 527 of 16S rRNA. This chain is Ribosomal RNA small subunit methyltransferase G, found in Campylobacter jejuni subsp. jejuni serotype O:2 (strain ATCC 700819 / NCTC 11168).